Consider the following 158-residue polypeptide: UPF0303 protein SCO2848 (158 aa).

Belongs to the UPF0303 family.

The protein is UPF0303 protein SCO2848 of Streptomyces coelicolor (strain ATCC BAA-471 / A3(2) / M145).